The sequence spans 4731 residues: Dynein axonemal heavy chain 8 (4731 aa).

The interval 1–145 (MESEEGNAEP…SKFRRSMTGI (145 aa)) is disordered. Positions 9 to 55 (EPPPPSEEAPPPVVEEAPPPLPPEDTAPPPPEEQAPPPEGDAAPPPT) are enriched in pro residues. Residues 66–75 (EAPHPEDPKL) are compositionally biased toward basic and acidic residues. A compositionally biased stretch (acidic residues) spans 94–106 (SDEEVTLPEDEES). Residues 122–133 (SVLSDGISQSSR) are compositionally biased toward polar residues. Positions 145–169 (IPNLQETLKEKQARFREARENRKMK) form a coiled coil. Serine 917 carries the post-translational modification Phosphoserine. The interval 1177 to 1201 (FQNNSRGSDQPPASGKPLKKEERSF) is disordered. The stretch at 1543 to 1567 (DVDIEKINAELQEFQNRCRKLPRAL) forms a coiled coil. 4 AAA regions span residues 2049 to 2271 (YQNE…VLRT), 2331 to 2550 (SAVD…KLSL), 2657 to 2910 (FYPT…IWQG), and 3021 to 3275 (QFNE…YRRR). Residues 2087-2094 (GPAGTGKT) and 2369-2376 (GPSGSGKT) contribute to the ATP site. Residues 3290 to 3587 (YKSIYTDKVK…MDLLNDADMC (298 aa)) are stalk. Coiled coils occupy residues 3313–3405 (DKLM…ALNT), 3531–3583 (LKAN…LLND), and 3836–3871 (RVIL…DNLL). 2 AAA regions span residues 3673–3903 (LVDP…EVSE) and 4118–4332 (ARKY…FIQN).

This sequence belongs to the dynein heavy chain family. In terms of assembly, consists of at least two heavy chains and a number of intermediate and light chains. Isoform 1 and/or isoform 2 are expressed in spermatocytes and mature sperm (at protein level). Testis-specific. Accumulates exclusively in mid to late spermatocytes.

The protein resides in the cytoplasm. Its subcellular location is the cytoskeleton. The protein localises to the flagellum axoneme. In terms of biological role, force generating protein component of the outer dynein arms (ODAs) in the sperm flagellum. Produces force towards the minus ends of microtubules. Dynein has ATPase activity; the force-producing power stroke is thought to occur on release of ADP. Involved in sperm motility; implicated in sperm flagellar assembly. The polypeptide is Dynein axonemal heavy chain 8 (Dnah8) (Mus musculus (Mouse)).